A 136-amino-acid chain; its full sequence is Putative pre-16S rRNA nuclease (136 aa).

The protein belongs to the YqgF nuclease family.

Its subcellular location is the cytoplasm. Functionally, could be a nuclease involved in processing of the 5'-end of pre-16S rRNA. The chain is Putative pre-16S rRNA nuclease from Francisella tularensis subsp. tularensis (strain WY96-3418).